Reading from the N-terminus, the 314-residue chain is Deoxymugineic acid synthase 1-B (314 aa).

The interval methionine 1 to glycine 22 is disordered. Aspartate 44 serves as a coordination point for NADP(+). The active-site Proton donor is the tyrosine 49. Residue histidine 112 participates in substrate binding. Residues alanine 158–asparagine 159, glutamine 180, phenylalanine 258–asparagine 266, and glutamate 273–arginine 281 each bind NADP(+).

This sequence belongs to the aldo/keto reductase family. Mostly expressed in root tissues, observed in mesocotyl and embryonic roots, seedling roots, crown and seedling leafes, mature bracts, anthers, pistil, caryopsis and embryos.

The catalysed reaction is 2'-deoxymugineate + NAD(+) = 3''-deamino-3''-oxonicotianamine + NADH + H(+). The enzyme catalyses 2'-deoxymugineate + NADP(+) = 3''-deamino-3''-oxonicotianamine + NADPH + H(+). Its pathway is siderophore biosynthesis. Its function is as follows. Catalyzes the reduction of a 3''-keto intermediate during the biosynthesis of 2'-deoxymugineic acid (DMA) from L-Met. Involved in the formation of phytosiderophores (MAs) belonging to the mugineic acid family and required to acquire iron. The chain is Deoxymugineic acid synthase 1-B from Triticum aestivum (Wheat).